Consider the following 202-residue polypeptide: Imidazoleglycerol-phosphate dehydratase (202 aa).

It belongs to the imidazoleglycerol-phosphate dehydratase family.

It localises to the cytoplasm. It carries out the reaction D-erythro-1-(imidazol-4-yl)glycerol 3-phosphate = 3-(imidazol-4-yl)-2-oxopropyl phosphate + H2O. Its pathway is amino-acid biosynthesis; L-histidine biosynthesis; L-histidine from 5-phospho-alpha-D-ribose 1-diphosphate: step 6/9. This is Imidazoleglycerol-phosphate dehydratase from Salinibacter ruber (strain DSM 13855 / M31).